Reading from the N-terminus, the 31-residue chain is Alpha-conotoxin Li1.12 (31 aa).

The propeptide occupies 1–15 (AGNAKMSALMALTIR). Cystine bridges form between Cys17/Cys23 and Cys18/Cys30. The residue at position 30 (Cys30) is a Cysteine amide.

It belongs to the conotoxin A superfamily. As to expression, expressed by the venom duct.

It is found in the secreted. Its function is as follows. Alpha-conotoxins act on postsynaptic membranes, they bind to the nicotinic acetylcholine receptors (nAChR) and thus inhibit them. This toxin inhibits alpha-3-beta-4, alpha-6/alpha-3-beta-4, and alpha-2-beta-4 nAChRs. This is Alpha-conotoxin Li1.12 from Conus lividus (Livid cone).